Reading from the N-terminus, the 312-residue chain is Methionyl-tRNA formyltransferase (312 aa).

(6S)-5,6,7,8-tetrahydrofolate is bound at residue 109–112; that stretch reads SLLP.

This sequence belongs to the Fmt family.

The enzyme catalyses L-methionyl-tRNA(fMet) + (6R)-10-formyltetrahydrofolate = N-formyl-L-methionyl-tRNA(fMet) + (6S)-5,6,7,8-tetrahydrofolate + H(+). Functionally, attaches a formyl group to the free amino group of methionyl-tRNA(fMet). The formyl group appears to play a dual role in the initiator identity of N-formylmethionyl-tRNA by promoting its recognition by IF2 and preventing the misappropriation of this tRNA by the elongation apparatus. The chain is Methionyl-tRNA formyltransferase from Anaeromyxobacter dehalogenans (strain 2CP-C).